Reading from the N-terminus, the 277-residue chain is Large ribosomal subunit protein uL2 (277 aa).

Disordered regions lie at residues M1–E23, P36–H58, and T219–K277. A compositionally biased stretch (polar residues) spans P8–D20. Positions K258–K277 are enriched in basic residues.

This sequence belongs to the universal ribosomal protein uL2 family. Part of the 50S ribosomal subunit. Forms a bridge to the 30S subunit in the 70S ribosome.

In terms of biological role, one of the primary rRNA binding proteins. Required for association of the 30S and 50S subunits to form the 70S ribosome, for tRNA binding and peptide bond formation. It has been suggested to have peptidyltransferase activity; this is somewhat controversial. Makes several contacts with the 16S rRNA in the 70S ribosome. This Bacillus licheniformis (strain ATCC 14580 / DSM 13 / JCM 2505 / CCUG 7422 / NBRC 12200 / NCIMB 9375 / NCTC 10341 / NRRL NRS-1264 / Gibson 46) protein is Large ribosomal subunit protein uL2.